The sequence spans 95 residues: Feather keratin B-4 (95 aa).

Ser1 bears the N-acetylserine mark.

Belongs to the avian keratin family. In terms of assembly, the avian keratins (F-ker, S-ker, C-ker and B-ker) are a complex mixture of very similar polypeptides.

In Columba livia (Rock dove), this protein is Feather keratin B-4.